The primary structure comprises 2432 residues: uncharacterized protein (2432 aa).

This sequence belongs to the IIV-6 261R/396L/443R family.

This is an uncharacterized protein from Invertebrate iridescent virus 6 (IIV-6).